Consider the following 636-residue polypeptide: 1-deoxy-D-xylulose-5-phosphate synthase (636 aa).

Residues His-74 and 115–117 each bind thiamine diphosphate; that span reads GHS. Position 146 (Asp-146) interacts with Mg(2+). Thiamine diphosphate is bound by residues 147-148, Asn-175, Tyr-286, and Glu-367; that span reads GA. Mg(2+) is bound at residue Asn-175.

It belongs to the transketolase family. DXPS subfamily. In terms of assembly, homodimer. The cofactor is Mg(2+). Thiamine diphosphate is required as a cofactor.

It carries out the reaction D-glyceraldehyde 3-phosphate + pyruvate + H(+) = 1-deoxy-D-xylulose 5-phosphate + CO2. It participates in metabolic intermediate biosynthesis; 1-deoxy-D-xylulose 5-phosphate biosynthesis; 1-deoxy-D-xylulose 5-phosphate from D-glyceraldehyde 3-phosphate and pyruvate: step 1/1. Its function is as follows. Catalyzes the acyloin condensation reaction between C atoms 2 and 3 of pyruvate and glyceraldehyde 3-phosphate to yield 1-deoxy-D-xylulose-5-phosphate (DXP). In Halothermothrix orenii (strain H 168 / OCM 544 / DSM 9562), this protein is 1-deoxy-D-xylulose-5-phosphate synthase.